Reading from the N-terminus, the 1480-residue chain is Cystic fibrosis transmembrane conductance regulator (1480 aa).

Residues 1–77 (MQRSPLEKAS…KLINALRRCF (77 aa)) lie on the Cytoplasmic side of the membrane. Residues 78-98 (FWRFMFYGIFLYLGEVTKAVQ) form a helical membrane-spanning segment. Positions 81-365 (FMFYGIFLYL…WAVQTWYDSL (285 aa)) constitute an ABC transmembrane type-1 1 domain. Residues 99-122 (PLLLGRIIASYDPDNKEERSIAIY) lie on the Extracellular side of the membrane. The helical transmembrane segment at 123–146 (LGIGLCLLFIVRTLLLHPAIFGLH) threads the bilayer. The Cytoplasmic portion of the chain corresponds to 147–195 (HIGMQMRIAMFSLIYKKTLKLSSRVLDKISIGQLVSLLSNNLNKFDEGL). Residues 196-216 (ALAHFVWIAPLQVALLMGLIW) traverse the membrane as a helical segment. Over 217-222 (ELLQAS) the chain is Extracellular. A helical transmembrane segment spans residues 223-243 (AFCGLGFLIVLALFQAGLGRM). Residues 244 to 298 (MMKYRDQRAGKISERLVITSEMIENIQSVKAYCWEEAMEKMIENLRQTELKLTRK) lie on the Cytoplasmic side of the membrane. A helical transmembrane segment spans residues 299–319 (AAYVRYFNSSAFFFSGFFVVF). Over 320–339 (LSVLPYALIKGIILRKIFTT) the chain is Extracellular. Residues 340–358 (ISFCIVLRMAVTRQFPWAV) traverse the membrane as a helical segment. Residues 359-858 (QTWYDSLGAI…YLRYITVHKS (500 aa)) lie on the Cytoplasmic side of the membrane. ATP is bound by residues Trp401, Ser434, 458–465 (GSTGAGKT), and Gln493. The 224-residue stretch at 423–646 (NGDDSLFFSN…RPDFSSKLMG (224 aa)) folds into the ABC transporter 1 domain. The S-palmitoyl cysteine moiety is linked to residue Cys524. Residues Ser549 and Ser660 each carry the phosphoserine modification. Positions 654–831 (SAERRNSILT…EEINEEDLKE (178 aa)) are disordered R region. Ser670 is subject to Phosphoserine; by PKA. Ser686 carries the phosphoserine modification. Residue Lys688 forms a Glycyl lysine isopeptide (Lys-Gly) (interchain with G-Cter in ubiquitin) linkage. Phosphoserine is present on residues Ser700 and Ser712. Thr717 bears the Phosphothreonine mark. 6 positions are modified to phosphoserine: Ser737, Ser753, Ser768, Ser790, Ser795, and Ser813. Residues 859–879 (LIFVLIWCLVIFLAEVAASLV) traverse the membrane as a helical segment. One can recognise an ABC transmembrane type-1 2 domain in the interval 859–1155 (LIFVLIWCLV…AVNSSIDVDS (297 aa)). The Extracellular portion of the chain corresponds to 880–918 (VLWLLGNTPLQDKGNSTHSRNNSYAVIITSTSSYYVFYI). N-linked (GlcNAc...) asparagine glycans are attached at residues Asn894 and Asn900. A discontinuously helical membrane pass occupies residues 919–939 (YVGVADTLLAMGFFRGLPLVH). Residues 940–990 (TLITVSKILHHKMLHSVLQAPMSTLNTLKAGGILNRFSKDIAILDDLLPLT) are Cytoplasmic-facing. A helical membrane pass occupies residues 991-1011 (IFDFIQLLLIVIGAIAVVAVL). At 1012–1013 (QP) the chain is on the extracellular side. The helical transmembrane segment at 1014 to 1034 (YIFVATVPVIVAFIMLRAYFL) threads the bilayer. Residues 1035–1095 (QTSQQLKQLE…TANWFLYLST (61 aa)) are Cytoplasmic-facing. Residues 1096–1116 (LRWFQMRIEMIFVIFFIAVTF) traverse the membrane as a helical segment. Residues 1117 to 1130 (ISILTTGEGEGRVG) lie on the Extracellular side of the membrane. The helical transmembrane segment at 1131 to 1151 (IILTLAMNIMSTLQWAVNSSI) threads the bilayer. The Cytoplasmic segment spans residues 1152–1480 (DVDSLMRSVS…TEEEVQDTRL (329 aa)). An ABC transporter 2 domain is found at 1210–1443 (MTVKDLTAKY…RSLFRQAISP (234 aa)). Residues Tyr1219 and 1244–1251 (GRTGSGKS) contribute to the ATP site. Positions 1386 to 1480 (RTLKQAFADC…TEEEVQDTRL (95 aa)) are interaction with GORASP2. Residue Cys1395 is the site of S-palmitoyl cysteine attachment. 2 positions are modified to phosphoserine: Ser1444 and Ser1456. The tract at residues 1452 to 1480 (HRNSSKCKSKPQIAALKEETEEEVQDTRL) is disordered. Residues 1470–1480 (ETEEEVQDTRL) show a composition bias toward acidic residues. A PDZ-binding motif is present at residues 1478–1480 (TRL).

Belongs to the ABC transporter superfamily. ABCC family. CFTR transporter (TC 3.A.1.202) subfamily. As to quaternary structure, monomer; does not require oligomerization for channel activity. May form oligomers in the membrane. Interacts with SLC26A3, SLC26A6 and NHERF1. Interacts with SHANK2. Interacts with MYO6. Interacts (via C-terminus) with GOPC (via PDZ domain); this promotes CFTR internalization and thereby decreases channel activity. Interacts with SLC4A7 through NHERF1. Found in a complex with MYO5B and RAB11A. Interacts with ANO1. Interacts with SLC26A8. Interacts with AHCYL1; the interaction increases CFTR activity. Interacts with CSE1L. The core-glycosylated form interacts with GORASP2 (via PDZ GRASP-type 1 domain) in respone to ER stress. Interacts with MARCHF2; the interaction leads to CFTR ubiqtuitination and degradation. Interacts with ADGRG2. Post-translationally, N-glycosylated. In terms of processing, phosphorylated; cAMP treatment promotes phosphorylation and activates the channel. Dephosphorylation decreases the ATPase activity (in vitro). Phosphorylation at PKA sites activates the channel. Phosphorylation at PKC sites enhances the response to phosphorylation by PKA. Phosphorylated by AMPK; this inhibits channel activity. Ubiquitinated, leading to its degradation in the lysosome. Deubiquitination by USP10 in early endosomes enhances its endocytic recycling to the cell membrane. Ubiquitinated by RNF185 during ER stress. Ubiquitinated by MARCHF2.

The protein localises to the apical cell membrane. It localises to the early endosome membrane. It is found in the cell membrane. The protein resides in the recycling endosome membrane. Its subcellular location is the endoplasmic reticulum membrane. The protein localises to the nucleus. The enzyme catalyses ATP + H2O + closed Cl(-) channel = ADP + phosphate + open Cl(-) channel.. It carries out the reaction chloride(in) = chloride(out). The catalysed reaction is hydrogencarbonate(in) = hydrogencarbonate(out). It catalyses the reaction ATP + H2O = ADP + phosphate + H(+). Its function is as follows. Epithelial ion channel that plays an important role in the regulation of epithelial ion and water transport and fluid homeostasis. Mediates the transport of chloride ions across the cell membrane. Possesses an intrinsic ATPase activity and utilizes ATP to gate its channel; the passive flow of anions through the channel is gated by cycles of ATP binding and hydrolysis by the ATP-binding domains. The ion channel is also permeable to HCO(3)(-); selectivity depends on the extracellular chloride concentration. Exerts its function also by modulating the activity of other ion channels and transporters. Contributes to the regulation of the pH and the ion content of the epithelial fluid layer. Modulates the activity of the epithelial sodium channel (ENaC) complex, in part by regulating the cell surface expression of the ENaC complex. May regulate bicarbonate secretion and salvage in epithelial cells by regulating the transporter SLC4A7. Can inhibit the chloride channel activity of ANO1. Plays a role in the chloride and bicarbonate homeostasis during sperm epididymal maturation and capacitation. This is Cystic fibrosis transmembrane conductance regulator from Pan troglodytes (Chimpanzee).